The chain runs to 122 residues: Large ribosomal subunit protein uL14 (122 aa).

Belongs to the universal ribosomal protein uL14 family. Part of the 50S ribosomal subunit. Forms a cluster with proteins L3 and L19. In the 70S ribosome, L14 and L19 interact and together make contacts with the 16S rRNA in bridges B5 and B8.

Binds to 23S rRNA. Forms part of two intersubunit bridges in the 70S ribosome. This is Large ribosomal subunit protein uL14 from Allorhizobium ampelinum (strain ATCC BAA-846 / DSM 112012 / S4) (Agrobacterium vitis (strain S4)).